The sequence spans 333 residues: Phenylalanine--tRNA ligase alpha subunit (333 aa).

A Mg(2+)-binding site is contributed by Glu248.

It belongs to the class-II aminoacyl-tRNA synthetase family. Phe-tRNA synthetase alpha subunit type 1 subfamily. As to quaternary structure, tetramer of two alpha and two beta subunits. Mg(2+) serves as cofactor.

The protein localises to the cytoplasm. The catalysed reaction is tRNA(Phe) + L-phenylalanine + ATP = L-phenylalanyl-tRNA(Phe) + AMP + diphosphate + H(+). The protein is Phenylalanine--tRNA ligase alpha subunit of Ureaplasma parvum serovar 3 (strain ATCC 27815 / 27 / NCTC 11736).